Here is a 453-residue protein sequence, read N- to C-terminus: Tyrosine-protein phosphatase non-receptor type 18 (453 aa).

Positions 26–291 (LAREFSDIKA…RFLYHTVAQL (266 aa)) constitute a Tyrosine-protein phosphatase domain. Residues Asp-197, 229–235 (CSAGCGR), and Gln-276 each bind substrate. Cys-229 functions as the Phosphocysteine intermediate in the catalytic mechanism. Phosphotyrosine occurs at positions 381 and 419. The interval 384 to 453 (VAPRAQRPVA…RDPPAEWTRV (70 aa)) is disordered. Over residues 442-453 (GPRDPPAEWTRV) the composition is skewed to basic and acidic residues.

The protein belongs to the protein-tyrosine phosphatase family. Non-receptor class 4 subfamily. In terms of assembly, interacts with PSTPIP1. As to expression, highest expression in bone marrow. Also expressed in kidney, lung, ovary, spleen, thymus and lymph node.

Its subcellular location is the nucleus. It is found in the cytoplasm. The enzyme catalyses O-phospho-L-tyrosyl-[protein] + H2O = L-tyrosyl-[protein] + phosphate. Its function is as follows. May be involved in growth and differentiation of hematopoietic cells. This Mus musculus (Mouse) protein is Tyrosine-protein phosphatase non-receptor type 18 (Ptpn18).